The primary structure comprises 671 residues: Zinc finger protein 750 (671 aa).

A CCHC-type zinc finger spans residues 25–51 (YKCFQCPFTCNEKSHLFNHMKYGLCKN). Zn(2+)-binding residues include C27, C30, H43, and C49. Disordered stretches follow at residues 66–87 (PKVN…SPVP), 366–433 (ETSP…KDFT), and 592–671 (SSPG…PRVS). Composition is skewed to polar residues over residues 67 to 78 (KVNSTDQKQPSN) and 402 to 412 (SPTNFTQNSQG).

Its subcellular location is the nucleus. In terms of biological role, transcription factor involved in epidermis differentiation. The chain is Zinc finger protein 750 (znf750) from Xenopus tropicalis (Western clawed frog).